We begin with the raw amino-acid sequence, 377 residues long: D-alanine--D-alanine ligase (377 aa).

The 210-residue stretch at 140-349 (KELLTVNGIR…NAKLVDMLID (210 aa)) folds into the ATP-grasp domain. 170–225 (VAELGNIVFVKAANQGSSVGISRVTNAEEYTEALSDSFQYDYKVLIEEAVNGAREL) provides a ligand contact to ATP. Residues aspartate 303, glutamate 316, and asparagine 318 each contribute to the Mg(2+) site.

Belongs to the D-alanine--D-alanine ligase family. Mg(2+) serves as cofactor. Mn(2+) is required as a cofactor.

It localises to the cytoplasm. The catalysed reaction is 2 D-alanine + ATP = D-alanyl-D-alanine + ADP + phosphate + H(+). The protein operates within cell wall biogenesis; peptidoglycan biosynthesis. In terms of biological role, cell wall formation. This Leuconostoc mesenteroides protein is D-alanine--D-alanine ligase.